The following is a 220-amino-acid chain: Deoxyribose-phosphate aldolase (220 aa).

D89 (proton donor/acceptor) is an active-site residue. K151 serves as the catalytic Schiff-base intermediate with acetaldehyde. The active-site Proton donor/acceptor is the K180.

It belongs to the DeoC/FbaB aldolase family. DeoC type 1 subfamily.

The protein resides in the cytoplasm. The enzyme catalyses 2-deoxy-D-ribose 5-phosphate = D-glyceraldehyde 3-phosphate + acetaldehyde. It participates in carbohydrate degradation; 2-deoxy-D-ribose 1-phosphate degradation; D-glyceraldehyde 3-phosphate and acetaldehyde from 2-deoxy-alpha-D-ribose 1-phosphate: step 2/2. Functionally, catalyzes a reversible aldol reaction between acetaldehyde and D-glyceraldehyde 3-phosphate to generate 2-deoxy-D-ribose 5-phosphate. The sequence is that of Deoxyribose-phosphate aldolase from Bdellovibrio bacteriovorus (strain ATCC 15356 / DSM 50701 / NCIMB 9529 / HD100).